We begin with the raw amino-acid sequence, 24 residues long: Formate ester dehydrogenase gamma chain (24 aa).

Heterotrimer composed of an alpha, a beta and a gamma chain.

In Amycolatopsis methanolica, this protein is Formate ester dehydrogenase gamma chain.